Here is a 125-residue protein sequence, read N- to C-terminus: Aspartate 1-decarboxylase (125 aa).

Ser25 acts as the Schiff-base intermediate with substrate; via pyruvic acid in catalysis. At Ser25 the chain carries Pyruvic acid (Ser). Residue Thr57 participates in substrate binding. The active-site Proton donor is Tyr58. 71-73 (GAA) is a substrate binding site.

This sequence belongs to the PanD family. In terms of assembly, heterooctamer of four alpha and four beta subunits. The cofactor is pyruvate. Is synthesized initially as an inactive proenzyme, which is activated by self-cleavage at a specific serine bond to produce a beta-subunit with a hydroxyl group at its C-terminus and an alpha-subunit with a pyruvoyl group at its N-terminus.

Its subcellular location is the cytoplasm. It catalyses the reaction L-aspartate + H(+) = beta-alanine + CO2. The protein operates within cofactor biosynthesis; (R)-pantothenate biosynthesis; beta-alanine from L-aspartate: step 1/1. In terms of biological role, catalyzes the pyruvoyl-dependent decarboxylation of aspartate to produce beta-alanine. The polypeptide is Aspartate 1-decarboxylase (Hydrogenobaculum sp. (strain Y04AAS1)).